Consider the following 318-residue polypeptide: Thymidylate synthase (318 aa).

Residues arginine 25 and 180-181 each bind dUMP; that span reads RR. The active-site Nucleophile is cysteine 200. DUMP-binding positions include 220–223, asparagine 231, and 261–263; these read RSGD and HIY. (6R)-5,10-methylene-5,6,7,8-tetrahydrofolate is bound at residue aspartate 223. Alanine 317 serves as a coordination point for (6R)-5,10-methylene-5,6,7,8-tetrahydrofolate.

Belongs to the thymidylate synthase family. Bacterial-type ThyA subfamily. In terms of assembly, homodimer.

Its subcellular location is the cytoplasm. It catalyses the reaction dUMP + (6R)-5,10-methylene-5,6,7,8-tetrahydrofolate = 7,8-dihydrofolate + dTMP. It participates in pyrimidine metabolism; dTTP biosynthesis. Its function is as follows. Catalyzes the reductive methylation of 2'-deoxyuridine-5'-monophosphate (dUMP) to 2'-deoxythymidine-5'-monophosphate (dTMP) while utilizing 5,10-methylenetetrahydrofolate (mTHF) as the methyl donor and reductant in the reaction, yielding dihydrofolate (DHF) as a by-product. This enzymatic reaction provides an intracellular de novo source of dTMP, an essential precursor for DNA biosynthesis. The protein is Thymidylate synthase of Lactobacillus gasseri (strain ATCC 33323 / DSM 20243 / BCRC 14619 / CIP 102991 / JCM 1131 / KCTC 3163 / NCIMB 11718 / NCTC 13722 / AM63).